Consider the following 529-residue polypeptide: Zinc finger protein 572 (529 aa).

Positions 1–62 (MEQEKKLLVS…EWSKRHRPQH (62 aa)) are disordered. Residues Lys5 and Lys6 each participate in a glycyl lysine isopeptide (Lys-Gly) (interchain with G-Cter in SUMO2) cross-link. The span at 26 to 35 (TGDTSMNNLE) shows a compositional bias: polar residues. Basic and acidic residues predominate over residues 36–55 (TVHHNNSKADKLKEKPSEWS). 12 consecutive C2H2-type zinc fingers follow at residues 132-154 (YKCS…QRTH), 160-182 (YKCS…LRMH), 188-210 (YQCG…ERTH), 216-238 (YKCP…HRSH), 244-266 (YECS…QRTH), 272-294 (YKCP…QRTH), 300-322 (YKCL…QRIH), 328-350 (YQCP…QKMH), 384-406 (YRCC…QRTH), 412-434 (YRCS…QRTH), 440-462 (YKCP…RRTH), and 468-490 (YKCT…RKIH).

Belongs to the krueppel C2H2-type zinc-finger protein family.

Its subcellular location is the nucleus. Its function is as follows. May be involved in transcriptional regulation. The polypeptide is Zinc finger protein 572 (ZNF572) (Homo sapiens (Human)).